The following is a 493-amino-acid chain: MKEMEVRAFKDDIKKYKGKSVAVFVYEGDLKPLARLSKGTSNKAKRVAELENFKGKEGEILKVPTLGTSVDFVYIVGLGKKEKVGEDTYRRASANLVKRMRRDKVESTVVVIPRRGDVSKEITKAITEGAILGNYRFDKYKSKKEDEKFEIKEVLINRGDEEGIRLGKIFAEAQNYARNLVNEPGNVINPITLAEEAKKLAEEFGLECKVYDEKQIQEMGMMALYSVGKGSATPPRFIHLIYKPSGKPKEKIALVGKGLTFDSGGLNIKPGDYMRTMKMDKSGACAVLGIMRAIAQLKPDVEVHGLIGAAENMPDGNAYRPDDVIKAKNGKYIEIDNTDAEGRVTLADVLSYASELKPDKIIDMATLTGACMVALGEYTAGLFTNAPDFAEEIKKTAKRTGERVWELPMDDERLRKKIKNTVADVLNTGGRYGGAITAAMFLEEFVGEGIKWVHLDIAGPAWSKEEYGYYTKGGTGFGVRTCLEYIMKVSSNV.

The Mn(2+) site is built by lysine 257 and aspartate 262. Lysine 269 is a catalytic residue. Aspartate 280, aspartate 339, and glutamate 341 together coordinate Mn(2+). Arginine 343 is a catalytic residue.

The protein belongs to the peptidase M17 family. Mn(2+) is required as a cofactor.

It localises to the cytoplasm. The catalysed reaction is Release of an N-terminal amino acid, Xaa-|-Yaa-, in which Xaa is preferably Leu, but may be other amino acids including Pro although not Arg or Lys, and Yaa may be Pro. Amino acid amides and methyl esters are also readily hydrolyzed, but rates on arylamides are exceedingly low.. The enzyme catalyses Release of an N-terminal amino acid, preferentially leucine, but not glutamic or aspartic acids.. Its function is as follows. Presumably involved in the processing and regular turnover of intracellular proteins. Catalyzes the removal of unsubstituted N-terminal amino acids from various peptides. This chain is Probable cytosol aminopeptidase (pepA), found in Aquifex aeolicus (strain VF5).